The chain runs to 362 residues: Glutaminase-asparaginase (362 aa).

A signal peptide spans 1–25; sequence MNAALKTFAPSALALLLILPSSASA. The region spanning 35–362 is the Asparaginase/glutaminase domain; sequence ANVVILATGG…KELQRIFWEY (328 aa). Catalysis depends on Thr-45, which acts as the Acyl-ester intermediate. Residues Ser-92 and 125 to 126 contribute to the substrate site; that span reads TD.

It belongs to the asparaginase 1 family. As to quaternary structure, homotetramer.

It is found in the periplasm. It catalyses the reaction L-glutamine + H2O = L-glutamate + NH4(+). The catalysed reaction is L-asparagine + H2O = L-aspartate + NH4(+). This Pseudomonas putida (strain ATCC 47054 / DSM 6125 / CFBP 8728 / NCIMB 11950 / KT2440) protein is Glutaminase-asparaginase (ansB).